The following is a 526-amino-acid chain: Adenylosuccinate synthetase (526 aa).

Residues 102–108 and 130–132 contribute to the GTP site; these read GDEGKGK and GHT. The Proton acceptor role is filled by aspartate 103. Residues aspartate 103 and glycine 130 each contribute to the Mg(2+) site. Residues 103 to 106, 128 to 131, threonine 219, arginine 233, asparagine 310, threonine 325, and arginine 392 contribute to the IMP site; these read DEGK and NAGH. Catalysis depends on histidine 131, which acts as the Proton donor. 388–394 contributes to the substrate binding site; sequence TTTGRTR. Residues arginine 394, 420 to 422, and 502 to 504 contribute to the GTP site; these read KVD and GVG.

The protein belongs to the adenylosuccinate synthetase family. Homodimer. Mg(2+) serves as cofactor.

It localises to the cytoplasm. The catalysed reaction is IMP + L-aspartate + GTP = N(6)-(1,2-dicarboxyethyl)-AMP + GDP + phosphate + 2 H(+). It participates in purine metabolism; AMP biosynthesis via de novo pathway; AMP from IMP: step 1/2. Plays an important role in the de novo pathway and in the salvage pathway of purine nucleotide biosynthesis. Catalyzes the first committed step in the biosynthesis of AMP from IMP. The polypeptide is Adenylosuccinate synthetase (Phaeodactylum tricornutum (strain CCAP 1055/1)).